A 336-amino-acid chain; its full sequence is DNA-directed RNA polymerase subunit alpha (336 aa).

The segment at 1–232 is alpha N-terminal domain (alpha-NTD); sequence MIQKNWQELI…DQLGVFVNFD (232 aa). Positions 248-336 are alpha C-terminal domain (alpha-CTD); it reads FNPALLKKVD…DLAKRYEDQY (89 aa).

This sequence belongs to the RNA polymerase alpha chain family. Homodimer. The RNAP catalytic core consists of 2 alpha, 1 beta, 1 beta' and 1 omega subunit. When a sigma factor is associated with the core the holoenzyme is formed, which can initiate transcription.

The catalysed reaction is RNA(n) + a ribonucleoside 5'-triphosphate = RNA(n+1) + diphosphate. In terms of biological role, DNA-dependent RNA polymerase catalyzes the transcription of DNA into RNA using the four ribonucleoside triphosphates as substrates. This chain is DNA-directed RNA polymerase subunit alpha, found in Rhizobium radiobacter (Agrobacterium tumefaciens).